The following is a 274-amino-acid chain: Large ribosomal subunit protein uL2 (274 aa).

The tract at residues Val224–Lys274 is disordered. A compositionally biased stretch (basic residues) spans Tyr257–Lys274.

It belongs to the universal ribosomal protein uL2 family. Part of the 50S ribosomal subunit. Forms a bridge to the 30S subunit in the 70S ribosome.

Functionally, one of the primary rRNA binding proteins. Required for association of the 30S and 50S subunits to form the 70S ribosome, for tRNA binding and peptide bond formation. It has been suggested to have peptidyltransferase activity; this is somewhat controversial. Makes several contacts with the 16S rRNA in the 70S ribosome. This chain is Large ribosomal subunit protein uL2, found in Francisella tularensis subsp. tularensis (strain FSC 198).